Here is a 319-residue protein sequence, read N- to C-terminus: Nucleotide-binding protein Mvan_2698 (319 aa).

Over residues 1 to 12 (MTEQGMHQELRE) the composition is skewed to basic and acidic residues. The segment at 1-26 (MTEQGMHQELREGAGTAGDEGGLEAA) is disordered. 43–50 (GLSGAGRG) contributes to the ATP binding site. Position 94–97 (94–97 (DVRS)) interacts with GTP.

This sequence belongs to the RapZ-like family.

In terms of biological role, displays ATPase and GTPase activities. In Mycolicibacterium vanbaalenii (strain DSM 7251 / JCM 13017 / BCRC 16820 / KCTC 9966 / NRRL B-24157 / PYR-1) (Mycobacterium vanbaalenii), this protein is Nucleotide-binding protein Mvan_2698.